The following is a 172-amino-acid chain: MRSDVTKISPRRIIYPLSPAPFNTPCKLNIISPFIKLTSTHSANKGVNHTRNHRFTPYGLGRLQLKSKGCPDSLSKSSIHSTAWRRPPTLTATGLMGHSGTTGCISGGVLEGPESQLSVLLLHSLDTGDVGRLRIAGTNLGRRVGLAGSGSGSGSGSGSDTGPFKKSQYKIL.

Positions 147-159 are enriched in gly residues; it reads AGSGSGSGSGSGS. Residues 147-172 form a disordered region; that stretch reads AGSGSGSGSGSGSDTGPFKKSQYKIL.

This is an uncharacterized protein from Homo sapiens (Human).